The primary structure comprises 217 residues: Somatotropin (217 aa).

The signal sequence occupies residues 1–26 (MATGSRTSLLLAFTLLCLPQLKEAGA). His-44 contacts Zn(2+). Cysteines 79 and 191 form a disulfide. Ser-132 carries the post-translational modification Phosphoserine. A Zn(2+)-binding site is contributed by Glu-200. The cysteines at positions 208 and 215 are disulfide-linked.

Belongs to the somatotropin/prolactin family.

It is found in the secreted. Functionally, plays an important role in growth control. Its major role in stimulating body growth is to stimulate the liver and other tissues to secrete IGF1. It stimulates both the differentiation and proliferation of myoblasts. It also stimulates amino acid uptake and protein synthesis in muscle and other tissues. This Saimiri boliviensis boliviensis (Bolivian squirrel monkey) protein is Somatotropin (GH1).